The primary structure comprises 185 residues: Transcription factor FapR (185 aa).

The protein belongs to the FapR family.

Transcriptional factor involved in regulation of membrane lipid biosynthesis by repressing genes involved in fatty acid and phospholipid metabolism. This Staphylococcus aureus (strain Mu3 / ATCC 700698) protein is Transcription factor FapR.